The primary structure comprises 147 residues: uncharacterized protein (147 aa).

The HTH marR-type domain occupies 1–137 (MRDNTIGSLI…LYELMTKVHK (137 aa)). Residues 53–76 (QMELAEKVTVTQGGISRMLTRLEK) constitute a DNA-binding region (H-T-H motif).

This is an uncharacterized protein from Bacillus cereus (strain ATCC 10987 / NRS 248).